We begin with the raw amino-acid sequence, 222 residues long: Oligoribonuclease (222 aa).

Residues 19 to 38 (PMASSSSTGKQEESVNGSLE) are disordered. Over residues 21–35 (ASSSSTGKQEESVNG) the composition is skewed to polar residues. Residues 46–210 (LVWIDLEMTG…DDIRESIKEL (165 aa)) form the Exonuclease domain. The active site involves His-167.

It belongs to the oligoribonuclease family.

In terms of biological role, 3'-to-5' exoribonuclease specific for small oligoribonucleotides. This Arabidopsis thaliana (Mouse-ear cress) protein is Oligoribonuclease.